We begin with the raw amino-acid sequence, 101 residues long: Small ribosomal subunit protein uS14 (101 aa).

Belongs to the universal ribosomal protein uS14 family. As to quaternary structure, part of the 30S ribosomal subunit. Contacts proteins S3 and S10.

Its function is as follows. Binds 16S rRNA, required for the assembly of 30S particles and may also be responsible for determining the conformation of the 16S rRNA at the A site. In Polynucleobacter asymbioticus (strain DSM 18221 / CIP 109841 / QLW-P1DMWA-1) (Polynucleobacter necessarius subsp. asymbioticus), this protein is Small ribosomal subunit protein uS14.